Reading from the N-terminus, the 57-residue chain is U-Asilidin(1)-Mar2a (57 aa).

The signal sequence occupies residues 1–24 (MAPLLKLNILLLIVLICFTFHANA). Cystine bridges form between Cys28-Cys44, Cys35-Cys48, and Cys43-Cys53.

The protein belongs to the asilidin-1 family. As to expression, expressed by the venom gland. Exclusively expressed in the venom thoracic glands (and not in body tissues).

It is found in the secreted. Its function is as follows. May act as a neurotoxin. The sequence is that of U-Asilidin(1)-Mar2a from Machimus arthriticus (Breck robberfly).